The sequence spans 313 residues: Methionyl-tRNA formyltransferase (313 aa).

113–116 is a (6S)-5,6,7,8-tetrahydrofolate binding site; the sequence is SLLP.

The protein belongs to the Fmt family.

The catalysed reaction is L-methionyl-tRNA(fMet) + (6R)-10-formyltetrahydrofolate = N-formyl-L-methionyl-tRNA(fMet) + (6S)-5,6,7,8-tetrahydrofolate + H(+). Attaches a formyl group to the free amino group of methionyl-tRNA(fMet). The formyl group appears to play a dual role in the initiator identity of N-formylmethionyl-tRNA by promoting its recognition by IF2 and preventing the misappropriation of this tRNA by the elongation apparatus. This chain is Methionyl-tRNA formyltransferase, found in Francisella tularensis subsp. holarctica (strain FTNF002-00 / FTA).